Consider the following 193-residue polypeptide: uncharacterized protein (193 aa).

A disordered region spans residues 1 to 144; it reads MEKKRTLSVN…NNNNNNEGTI (144 aa). Residues 29 to 86 show a composition bias toward low complexity; the sequence is NSLNNIENNECNNNNNNNNNNNNNNSNSNNLNNSNNNNINTSSNSINSSNSINNSIDN. A compositionally biased stretch (polar residues) spans 103 to 118; sequence KMNSSQEFQSYLTPNK. A compositionally biased stretch (low complexity) spans 119–140; it reads NNNNRNNNNRNNNNNNNNNNNN. The chain crosses the membrane as a helical span at residues 158–180; that stretch reads YMIRPFLVGASASFGISIGMFYF.

The protein localises to the membrane. This is an uncharacterized protein from Dictyostelium discoideum (Social amoeba).